A 478-amino-acid polypeptide reads, in one-letter code: Cytochrome c-552 (478 aa).

An N-terminal signal peptide occupies residues 1–26 (MARKTLRARRFFSLIFPFFFITSVYA). His-94 lines the heme c pocket. Residues Cys-122, Cys-125, and Lys-126 each coordinate heme. Residues Cys-160, Cys-163, His-164, Cys-209, Cys-212, and His-213 each coordinate heme c. The Ca(2+) site is built by Glu-215, Tyr-216, Lys-261, and Gln-263. Tyr-216 contacts substrate. His-264 lines the substrate pocket. 9 residues coordinate heme c: His-275, Cys-282, Cys-285, His-286, His-301, Cys-314, Cys-317, His-318, and His-393.

Belongs to the cytochrome c-552 family. The cofactor is Ca(2+). Heme c is required as a cofactor.

Its subcellular location is the periplasm. It catalyses the reaction 6 Fe(III)-[cytochrome c] + NH4(+) + 2 H2O = 6 Fe(II)-[cytochrome c] + nitrite + 8 H(+). It participates in nitrogen metabolism; nitrate reduction (assimilation). Catalyzes the reduction of nitrite to ammonia, consuming six electrons in the process. The chain is Cytochrome c-552 from Salmonella paratyphi C (strain RKS4594).